Consider the following 419-residue polypeptide: D-amino acid dehydrogenase (419 aa).

3 to 17 contributes to the FAD binding site; that stretch reads VLILGGGVVGVTSAY.

This sequence belongs to the DadA oxidoreductase family. FAD serves as cofactor.

The enzyme catalyses a D-alpha-amino acid + A + H2O = a 2-oxocarboxylate + AH2 + NH4(+). The protein operates within amino-acid degradation; D-alanine degradation; NH(3) and pyruvate from D-alanine: step 1/1. Oxidative deamination of D-amino acids. The sequence is that of D-amino acid dehydrogenase from Methylobacterium radiotolerans (strain ATCC 27329 / DSM 1819 / JCM 2831 / NBRC 15690 / NCIMB 10815 / 0-1).